Consider the following 370-residue polypeptide: Aspartate-semialdehyde dehydrogenase 1 (370 aa).

NADP(+) is bound by residues 9–12 (RGMV), 36–37 (TS), and Gln-72. Arg-101 serves as a coordination point for phosphate. Cys-134 serves as the catalytic Acyl-thioester intermediate. Cys-134 is modified (S-cysteinyl cysteine; in inhibited form). Gln-161 contributes to the substrate binding site. NADP(+) is bound by residues 164 to 165 (SG) and Pro-192. Residue Glu-240 participates in substrate binding. Lys-243 lines the phosphate pocket. Arg-267 contacts substrate. His-274 (proton acceptor) is an active-site residue. An NADP(+)-binding site is contributed by Gln-350.

Belongs to the aspartate-semialdehyde dehydrogenase family. In terms of assembly, homodimer.

The enzyme catalyses L-aspartate 4-semialdehyde + phosphate + NADP(+) = 4-phospho-L-aspartate + NADPH + H(+). It functions in the pathway amino-acid biosynthesis; L-lysine biosynthesis via DAP pathway; (S)-tetrahydrodipicolinate from L-aspartate: step 2/4. Its pathway is amino-acid biosynthesis; L-methionine biosynthesis via de novo pathway; L-homoserine from L-aspartate: step 2/3. The protein operates within amino-acid biosynthesis; L-threonine biosynthesis; L-threonine from L-aspartate: step 2/5. Inhibited by S-methyl-L-cysteine sulfoxide in vitro, via the formation of a covalently bound cysteine at the active site Cys-134. Functionally, catalyzes the NADPH-dependent formation of L-aspartate-semialdehyde (L-ASA) by the reductive dephosphorylation of L-aspartyl-4-phosphate. In Vibrio cholerae serotype O1 (strain ATCC 39315 / El Tor Inaba N16961), this protein is Aspartate-semialdehyde dehydrogenase 1 (asd1).